We begin with the raw amino-acid sequence, 184 residues long: Endoribonuclease YbeY (184 aa).

Zn(2+)-binding residues include His146, His150, and His156.

This sequence belongs to the endoribonuclease YbeY family. The cofactor is Zn(2+).

The protein resides in the cytoplasm. Functionally, single strand-specific metallo-endoribonuclease involved in late-stage 70S ribosome quality control and in maturation of the 3' terminus of the 16S rRNA. The polypeptide is Endoribonuclease YbeY (Nostoc sp. (strain PCC 7120 / SAG 25.82 / UTEX 2576)).